The following is a 142-amino-acid chain: UPF0102 protein Bcep1808_0248 (142 aa).

This sequence belongs to the UPF0102 family.

The protein is UPF0102 protein Bcep1808_0248 of Burkholderia vietnamiensis (strain G4 / LMG 22486) (Burkholderia cepacia (strain R1808)).